Consider the following 558-residue polypeptide: Cytochrome P450 monooxygenase sdnT (558 aa).

Residues 21–41 (IISLTTCFVCAFAVSFVALAI) traverse the membrane as a helical segment. A disordered region spans residues 298–317 (QNAGSNTRPKPPKRKQDTQP). 2 N-linked (GlcNAc...) asparagine glycosylation sites follow: N464 and N495. C505 lines the heme pocket.

The protein belongs to the cytochrome P450 family. Heme is required as a cofactor.

Its subcellular location is the membrane. It functions in the pathway antibiotic biosynthesis. Functionally, cytochrome P450 monooxygenase; part of the gene cluster that mediates the biosynthesis of sordarin and hypoxysordarin, glycoside antibiotics with a unique tetracyclic diterpene aglycone structure. First, the geranylgeranyl diphosphate synthase sdnC constructs GGDP from farnesyl diphosphate and isopentenyl diphosphate. The diterpene cyclase sdnA then catalyzes the cyclization of GGDP to afford cycloaraneosene. Cycloaraneosene is then hydroxylated four times by the putative cytochrome P450 monooxygenases sdnB, sdnE, sdnF and sdnH to give a hydroxylated cycloaraneosene derivative such as cycloaraneosene-8,9,13,19-tetraol. Although the order of the hydroxylations is unclear, at least C8, C9 and C13 of the cycloaraneosene skeleton are hydroxylated before the sordaricin formation. Dehydration of the 13-hydroxy group of the hydroxylated cycloaraneosene derivative might be catalyzed by an unassigned hypothetical protein such as sdnG and sdnP to construct the cyclopentadiene moiety. The FAD-dependent oxidoreductase sdnN is proposed to catalyze the oxidation at C9 of the hydroxylated cycloaraneosene derivative and also catalyze the Baeyer-Villiger oxidation to give the lactone intermediate. The presumed lactone intermediate would be hydrolyzed to give an acrolein moiety and a carboxylate moiety. Then, [4+2]cycloaddition would occur between the acrolein moiety and the cyclopentadiene moiety to give sordaricin. SdnN might also be involved in the [4+2]cycloaddition after the hypothesized oxidation to accommodate the oxidized product and prompt the [4+2]cycloaddition. GDP-6-deoxy-D-altrose may be biosynthesized from GDP-D-mannose by the putative GDP-mannose-4,6-dehydratase sdnI and the short-chain dehydrogenase sdnK. The glycosyltransferase sdnJ catalyzes the attachment of 6-deoxy-D-altrose onto the 19-hydroxy group of sordaricin to give 4'-O-demethylsordarin. The methyltransferase sdnD would complete the biosynthesis of sordarin. Sordarin can be further modified into hypoxysordarin. The unique acyl chain at the 3'-hydroxy group of hypoxysordarin would be constructed by an iterative type I PKS sdnO and the trans-acting polyketide methyltransferase sdnL. SdnL would be responsible for the introduction of an alpha-methyl group of the polyketide chain. Alternatively, the beta-lactamase-like protein sdnR might be responsible for the cleavage and transfer of the polyketide chain from the PKS sdnO to sordarin. Two putative cytochrome P450 monooxygenases, sdnQ and sdnT, might catalyze the epoxidations of the polyketide chain to complete the biosynthesis of hypoxysordarin. Transcriptional regulators sdnM and sdnS are presumably encoded for the transcriptional regulation of the expression of the sdn gene cluster. In Sordaria araneosa (Pleurage araneosa), this protein is Cytochrome P450 monooxygenase sdnT.